The following is a 426-amino-acid chain: Phosphomethylpyrimidine synthase (426 aa).

Residues Asn65, Met94, Tyr123, His162, 184–186 (SRG), 225–228 (DGMR), and Glu264 each bind substrate. Residue His268 coordinates Zn(2+). A substrate-binding site is contributed by Tyr291. Position 332 (His332) interacts with Zn(2+). Cys408, Cys411, and Cys415 together coordinate [4Fe-4S] cluster.

This sequence belongs to the ThiC family. [4Fe-4S] cluster is required as a cofactor.

It catalyses the reaction 5-amino-1-(5-phospho-beta-D-ribosyl)imidazole + S-adenosyl-L-methionine = 4-amino-2-methyl-5-(phosphooxymethyl)pyrimidine + CO + 5'-deoxyadenosine + formate + L-methionine + 3 H(+). It participates in cofactor biosynthesis; thiamine diphosphate biosynthesis. Its function is as follows. Catalyzes the synthesis of the hydroxymethylpyrimidine phosphate (HMP-P) moiety of thiamine from aminoimidazole ribotide (AIR) in a radical S-adenosyl-L-methionine (SAM)-dependent reaction. The protein is Phosphomethylpyrimidine synthase of Methanococcus maripaludis (strain C6 / ATCC BAA-1332).